Consider the following 596-residue polypeptide: Aspartate--tRNA(Asp/Asn) ligase (596 aa).

E182 is a binding site for L-aspartate. The tract at residues 206–209 is aspartate; sequence QLFK. Position 228 (R228) interacts with L-aspartate. ATP-binding positions include 228-230 and Q237; that span reads RDE. H456 lines the L-aspartate pocket. E490 lines the ATP pocket. R497 contributes to the L-aspartate binding site. 542-545 provides a ligand contact to ATP; sequence GLDR.

Belongs to the class-II aminoacyl-tRNA synthetase family. Type 1 subfamily. In terms of assembly, homodimer.

The protein localises to the cytoplasm. It catalyses the reaction tRNA(Asx) + L-aspartate + ATP = L-aspartyl-tRNA(Asx) + AMP + diphosphate. Aspartyl-tRNA synthetase with relaxed tRNA specificity since it is able to aspartylate not only its cognate tRNA(Asp) but also tRNA(Asn). Reaction proceeds in two steps: L-aspartate is first activated by ATP to form Asp-AMP and then transferred to the acceptor end of tRNA(Asp/Asn). The sequence is that of Aspartate--tRNA(Asp/Asn) ligase from Syntrophotalea carbinolica (strain DSM 2380 / NBRC 103641 / GraBd1) (Pelobacter carbinolicus).